Here is a 549-residue protein sequence, read N- to C-terminus: Cytochrome bc1 complex cytochrome b subunit (549 aa).

The helical transmembrane segment at 54-74 threads the bilayer; it reads VCLYSFIIIILTGVYLTLFFH. Positions 118 and 132 each coordinate heme. 3 consecutive transmembrane segments (helical) span residues 122 to 142, 150 to 170, and 182 to 202; these read ALIF…TGAF, WLFG…GYSL, and FMEG…FFLF. 2 residues coordinate heme: His219 and His234. Transmembrane regions (helical) follow at residues 220 to 240, 269 to 289, 334 to 354, 389 to 409, and 417 to 437; these read ILLL…LVFY, AGGF…IATI, LVLG…AIAV, FGVA…NDLW, and INAI…VAFI.

It belongs to the cytochrome b family. The cytochrome bc1 complex is composed of a cytochrome b (QcrB), the Rieske iron-sulfur protein (QcrA) and a diheme cytochrome c (QcrC) subunit. Requires heme as cofactor.

The protein resides in the cell membrane. It catalyses the reaction a quinol + 2 Fe(III)-[cytochrome c](out) = a quinone + 2 Fe(II)-[cytochrome c](out) + 2 H(+)(out). Cytochrome b subunit of the cytochrome bc1 complex, an essential component of the respiratory electron transport chain required for ATP synthesis. The bc1 complex catalyzes the oxidation of ubiquinol and the reduction of cytochrome c in the respiratory chain. The bc1 complex operates through a Q-cycle mechanism that couples electron transfer to generation of the proton gradient that drives ATP synthesis. The cytochrome b subunit contains two ubiquinol reactive sites: the oxidation (QP) site and the reduction (QN) site. This Streptomyces lividans protein is Cytochrome bc1 complex cytochrome b subunit (qcrB).